The chain runs to 398 residues: Enolase (398 aa).

Q154 is a binding site for (2R)-2-phosphoglycerate. E196 functions as the Proton donor in the catalytic mechanism. Residues D232, E273, and D300 each contribute to the Mg(2+) site. Residues K325, R354, S355, and K376 each contribute to the (2R)-2-phosphoglycerate site. K325 functions as the Proton acceptor in the catalytic mechanism.

This sequence belongs to the enolase family. Requires Mg(2+) as cofactor.

It localises to the cytoplasm. The protein localises to the secreted. It is found in the cell surface. The catalysed reaction is (2R)-2-phosphoglycerate = phosphoenolpyruvate + H2O. It participates in carbohydrate degradation; glycolysis; pyruvate from D-glyceraldehyde 3-phosphate: step 4/5. Its function is as follows. Catalyzes the reversible conversion of 2-phosphoglycerate (2-PG) into phosphoenolpyruvate (PEP). It is essential for the degradation of carbohydrates via glycolysis. In Halobacterium salinarum (strain ATCC 700922 / JCM 11081 / NRC-1) (Halobacterium halobium), this protein is Enolase.